The following is a 148-amino-acid chain: Large ribosomal subunit protein bL9 (148 aa).

The protein belongs to the bacterial ribosomal protein bL9 family.

Its function is as follows. Binds to the 23S rRNA. This Pseudomonas putida (strain W619) protein is Large ribosomal subunit protein bL9.